Consider the following 1593-residue polypeptide: THO complex subunit 2 (1593 aa).

Residues 1–163 (MAAAAVVVPA…KLFYKQQKFN (163 aa)) form an anchor domain; interaction with THOC5 and THOC7 region. Residues 164 to 534 (LLREENEGYA…GQWKNETYNS (371 aa)) form a bow domain; interaction with THOC1 dock domain and THOC3 region. The interval 322 to 341 (KMDEREKEKEKEEEKVEKPP) is disordered. Positions 535 to 686 (HPLLVKVKAQ…LILKEVVQKM (152 aa)) are MIF4G domain; interaction with THOC3 and DDX39B. A stern domain region spans residues 687 to 1174 (AGIEITEEMT…LAMGYSGQLK (488 aa)). A coiled-coil region spans residues 896–965 (HTSYEREVNK…LKLEKDNWLL (70 aa)). Positions 923–928 (KKKKEK) match the Nuclear localization signal motif. The tract at residues 1175–1593 (SRKSYMIPEN…KHHKSSDKHR (419 aa)) is charged domain. The segment at 1184-1593 (NEFHHKDPPP…KHHKSSDKHR (410 aa)) is disordered. Over residues 1218-1234 (KSDESSTEETDKSRERS) the composition is skewed to basic and acidic residues. A Phosphoserine modification is found at Ser1222. A compositionally biased stretch (low complexity) spans 1251–1263 (GNSSNGNSGSNSN). Composition is skewed to basic and acidic residues over residues 1265–1285 (AVKE…KEKT), 1294–1343 (VLGK…EKFK), and 1353–1383 (STQE…KGGE). At Thr1385 the chain carries Phosphothreonine. Phosphoserine is present on residues Ser1390, Ser1393, and Ser1417. Residues 1416-1425 (PSPSHSSTVK) show a composition bias toward polar residues. At Thr1443 the chain carries Phosphothreonine. The segment covering 1449–1504 (KSKEREMDKKDLDKSRERSREREKKDEKDRKERKRDHSNNDREVPPDLTKRRKEEN) has biased composition (basic and acidic residues). Residues Ser1450, Ser1486, and Ser1516 each carry the phosphoserine modification. Residues 1524-1582 (NEKDKEKNKSKSSGKEKGSDSFKSEKMDKISSGGKKESRHDKEKIEKKEKRDSSGGKEE) show a composition bias toward basic and acidic residues. Over residues 1583–1593 (KKHHKSSDKHR) the composition is skewed to basic residues.

This sequence belongs to the THOC2 family. As to quaternary structure, component of the THO subcomplex, which is composed of THOC1, THOC2, THOC3, THOC5, THOC6 and THOC7. The THO subcomplex interacts with DDX39B to form the THO-DDX39B complex which multimerizes into a 28-subunit tetrameric assembly. Component of the transcription/export (TREX) complex at least composed of ALYREF/THOC4, DDX39B, SARNP/CIP29, CHTOP and the THO subcomplex; in the complex interacts with THOC1, THOC3, THOC5, THOC7 and DDX39B. TREX seems to have a dynamic structure involving ATP-dependent remodeling. Interacts with POLDIP3 and ZC3H11A. As to expression, expressed in the hippocampus and the cerebral cortex.

Its subcellular location is the nucleus. It localises to the nucleus speckle. The protein resides in the cytoplasm. Its function is as follows. Component of the THO subcomplex of the TREX complex which is thought to couple mRNA transcription, processing and nuclear export, and which specifically associates with spliced mRNA and not with unspliced pre-mRNA. Required for efficient export of polyadenylated RNA and spliced mRNA. The THOC1-THOC2-THOC3 core complex alone is sufficient to bind export factor NXF1-NXT1 and promote ATPase activity of DDX39B; in the complex THOC2 is the only component that directly interacts with DDX39B. TREX is recruited to spliced mRNAs by a transcription-independent mechanism, binds to mRNA upstream of the exon-junction complex (EJC) and is recruited in a splicing- and cap-dependent manner to a region near the 5' end of the mRNA where it functions in mRNA export to the cytoplasm via the TAP/NXF1 pathway. Required for NXF1 localization to the nuclear rim. THOC2 (and probably the THO complex) is involved in releasing mRNA from nuclear speckle domains. Functionally, (Microbial infection) The TREX complex is essential for the export of Kaposi's sarcoma-associated herpesvirus (KSHV) intronless mRNAs and infectious virus production. The chain is THO complex subunit 2 (THOC2) from Homo sapiens (Human).